The primary structure comprises 1848 residues: Chitin synthase E (1848 aa).

Over residues 1-17 (MAAPSPAGGAPSHAQSS) the composition is skewed to low complexity. The tract at residues 1–22 (MAAPSPAGGAPSHAQSSLPSLP) is disordered. A Myosin motor domain is found at 1 to 779 (MAAPSPAGGA…CWADLAKVGE (779 aa)). Residue 102-109 (GESGSGKT) coordinates ATP. The tract at residues 593–621 (SSKPLRMPSMARRKTSPSSRLAFDAGDAD) is disordered. An actin-binding region spans residues 659 to 683 (LDIVNKCLSSTNLNPYFIFCLKPND). A run of 2 helical transmembrane segments spans residues 889–909 (WIAL…KLFG) and 928–948 (LIIW…PGLV). The region spanning 952-1040 (QHVYSAAELS…LLDYRPTNIS (89 aa)) is the Cytochrome b5 heme-binding domain. N1038 and N1063 each carry an N-linked (GlcNAc...) asparagine glycan. The chain crosses the membrane as a helical span at residues 1200–1220 (FILAISVLICSIIVFKFLAAL). N-linked (GlcNAc...) asparagine glycans are attached at residues N1423, N1457, and N1563. Helical transmembrane passes span 1595–1615 (LSTV…YWLV), 1621–1641 (IPYT…LIFI), and 1648–1668 (MVGW…ALPL). N1786 is a glycosylation site (N-linked (GlcNAc...) asparagine). The DEK-C domain occupies 1790-1845 (LPSDDAILAEIREILRTADLMSVTKKSIKLELERRFGVNLDLKRPYINSATEAVLA).

The protein in the N-terminal section; belongs to the TRAFAC class myosin-kinesin ATPase superfamily. Myosin family. In the C-terminal section; belongs to the chitin synthase family. Class V subfamily.

The protein localises to the cell membrane. The protein resides in the cell septum. It localises to the cell tip. The catalysed reaction is [(1-&gt;4)-N-acetyl-beta-D-glucosaminyl](n) + UDP-N-acetyl-alpha-D-glucosamine = [(1-&gt;4)-N-acetyl-beta-D-glucosaminyl](n+1) + UDP + H(+). In terms of biological role, polymerizes chitin, a structural polymer of the cell wall and septum, by transferring the sugar moiety of UDP-GlcNAc to the non-reducing end of the growing chitin polymer. Important for hyphal growth and conidiophore development but not pathogenicity. This is Chitin synthase E from Aspergillus fumigatus (strain ATCC MYA-4609 / CBS 101355 / FGSC A1100 / Af293) (Neosartorya fumigata).